An 850-amino-acid chain; its full sequence is Protein argonaute 8 (850 aa).

The tract at residues 1 to 30 (MDTTLPPPQHMEREPLKSKSSLLPMTRRGN) is disordered. A PAZ domain is found at 247–361 (PVVDFLIANQ…FPIELCELVS (115 aa)). A Piwi domain is found at 518–811 (QSILGEVPPK…AAAQMATAMK (294 aa)).

This sequence belongs to the argonaute family. Ago subfamily.

Its function is as follows. Involved in RNA-mediated post-transcriptional gene silencing (PTGS). Main component of the RNA-induced silencing complex (RISC) that binds to a short guide RNA such as a microRNA (miRNA) or small interfering RNA (siRNA). RISC uses the mature miRNA or siRNA as a guide for slicer-directed cleavage of homologous mRNAs to repress gene expression. This is Protein argonaute 8 (AGO8) from Arabidopsis thaliana (Mouse-ear cress).